Consider the following 433-residue polypeptide: Probable oxaloacetate decarboxylase beta chain (433 aa).

9 helical membrane-spanning segments follow: residues 13–35, 125–147, 162–184, 189–211, 215–237, 267–289, 309–328, 340–362, and 404–426; these read LFHLQWGQGIMILVGLVLLYLAI, YLFYSIAIASGAGPLIIFMGVGA, LLGAAAQFGIFTTVLGALALSSL, FSVAQAAAIGIIGGADGPTAIYV, LAPELLGAIAVAAYSYMALVPMI, IGFPLLLLILIALLLPSATPLLG, TAQNALINIVTIFLGLSVGS, TIGILVLGIVAFCVGTAAGVLMA, and FLLMHAMGPNVAGVIGSAVAAGV.

It belongs to the GcdB/MmdB/OadB family. Heterotrimer of an alpha, a beta and a gamma subunit. It depends on Na(+) as a cofactor.

The protein localises to the cell membrane. It carries out the reaction oxaloacetate + 2 Na(+)(in) + H(+) = pyruvate + 2 Na(+)(out) + CO2. Its function is as follows. Catalyzes the decarboxylation of oxaloacetate coupled to Na(+) translocation. The chain is Probable oxaloacetate decarboxylase beta chain (oadB) from Vibrio cholerae serotype O1 (strain ATCC 39315 / El Tor Inaba N16961).